The primary structure comprises 528 residues: Protein spinster homolog 1 (528 aa).

Positions 1 to 44 (MSGSDTAPFLSQADDTDDGPAPGTPGLPGSMGNPKSEDPAVPDQ) are disordered. 12 helical membrane-spanning segments follow: residues 50–70 (ITGL…YINL), 98–118 (GLIQ…FGYL), 126–146 (YLMC…SFIP), 160–180 (VGVG…DLFV), 187–207 (MLSV…IAGS), 218–238 (WALR…FLVV), 278–298 (LGFT…PAFL), 323–343 (LIFG…GVEI), 357–377 (LVCA…LACA), 381–401 (IVAT…NWAI), 421–441 (FQIV…IGSI), and 465–485 (MLCA…AIFI). At Ser-518 the chain carries Phosphoserine.

It belongs to the major facilitator superfamily. Spinster (TC 2.A.1.49) family. In terms of assembly, interacts with BCL2 and BCL2L1.

It localises to the lysosome membrane. The catalysed reaction is a 1-acyl-sn-glycero-3-phosphocholine(out) + H(+)(out) = a 1-acyl-sn-glycero-3-phosphocholine(in) + H(+)(in). The enzyme catalyses 1-hexadecanoyl-sn-glycero-3-phosphocholine(out) + H(+)(out) = 1-hexadecanoyl-sn-glycero-3-phosphocholine(in) + H(+)(in). It catalyses the reaction 1-(9Z-octadecenoyl)-sn-glycero-3-phosphocholine(out) + H(+)(out) = 1-(9Z-octadecenoyl)-sn-glycero-3-phosphocholine(in) + H(+)(in). It carries out the reaction 1-(5Z,8Z,11Z,14Z-eicosatetraenoyl)-sn-glycero-3-phosphocholine(out) + H(+)(out) = 1-(5Z,8Z,11Z,14Z-eicosatetraenoyl)-sn-glycero-3-phosphocholine(in) + H(+)(in). The catalysed reaction is 1-(4Z,7Z,10Z,13Z,16Z,19Z-docosahexaenoyl)-sn-glycero-3-phosphocholine(out) + H(+)(out) = 1-(4Z,7Z,10Z,13Z,16Z,19Z-docosahexaenoyl)-sn-glycero-3-phosphocholine(in) + H(+)(in). The enzyme catalyses a 1-acyl-sn-glycero-3-phosphoethanolamine(out) + H(+)(out) = a 1-acyl-sn-glycero-3-phosphoethanolamine(in) + H(+)(in). It catalyses the reaction 1-(9Z-octadecenoyl)-sn-glycero-3-phosphoethanolamine(out) + H(+)(out) = 1-(9Z-octadecenoyl)-sn-glycero-3-phosphoethanolamine(in) + H(+)(in). It carries out the reaction 1-acyl-sn-glycero-3-phospho-(1'-sn-glycerol)(out) + H(+)(out) = 1-acyl-sn-glycero-3-phospho-(1'-sn-glycerol)(in) + H(+)(in). The catalysed reaction is 1-(9Z-octadecenoyl)-sn-glycero-3-phospho-(1'-sn-glycerol)(out) + H(+)(out) = 1-(9Z-octadecenoyl)-sn-glycero-3-phospho-(1'-sn-glycerol)(in) + H(+)(in). The enzyme catalyses a 1-O-(1Z-alkenyl)-sn-glycero-3-phosphocholine(out) + H(+)(out) = a 1-O-(1Z-alkenyl)-sn-glycero-3-phosphocholine(in) + H(+)(in). It catalyses the reaction 1-(1Z-hexadecenyl)-sn-glycero-3-phosphocholine(out) + H(+)(out) = 1-(1Z-hexadecenyl)-sn-glycero-3-phosphocholine(in) + H(+)(in). It carries out the reaction a 1-O-(1Z-alkenyl)-sn-glycero-3-phosphoethanolamine(out) + H(+)(out) = a 1-O-(1Z-alkenyl)-sn-glycero-3-phosphoethanolamine(in) + H(+)(in). The catalysed reaction is 1-O-(1Z-hexadecenyl)-sn-glycero-3-phosphoethanolamine(out) + H(+)(out) = 1-O-(1Z-hexadecenyl)-sn-glycero-3-phosphoethanolamine(in) + H(+)(in). In terms of biological role, plays a critical role in the phospholipid salvage pathway from lysosomes to the cytosol. Mediates the rate-limiting, proton-dependent, lysosomal efflux of lysophospholipids, which can then be reacylated by acyltransferases in the endoplasmic reticulum to form phospholipids. Selective for zwitterionic headgroups such as lysophosphatidylcholine (LPC) and lysophosphatidylethanolamine (LPE), can also transport lysophosphatidylglycerol (LPG), but not other anionic lysophospholipids, sphingosine, nor sphingomyelin. Transports lysophospholipids with saturated, monounsaturated, and polyunsaturated fatty acids, such as 1-hexadecanoyl-sn-glycero-3-phosphocholine, 1-(9Z-octadecenoyl)-sn-glycero-3-phosphocholine and 1-(4Z,7Z,10Z,13Z,16Z,19Z-docosahexaenoyl)-sn-glycero-3-phosphocholine, respectively. Can also transport lysoplasmalogen (LPC with a fatty alcohol) such as 1-(1Z-hexadecenyl)-sn-glycero-3-phosphocholine. Essential player in lysosomal homeostasis. Crucial for cell survival under conditions of nutrient limitation. May be involved in necrotic or autophagic cell death. The protein is Protein spinster homolog 1 (SPNS1) of Bos taurus (Bovine).